The following is a 502-amino-acid chain: 4,4'-diapophytoene desaturase (4,4'-diaponeurosporene-forming) (502 aa).

5 to 17 (VIGAGVTGLAAAA) contacts FAD.

It belongs to the carotenoid/retinoid oxidoreductase family. CrtN subfamily.

It carries out the reaction 15-cis-4,4'-diapophytoene + 3 FAD + 3 H(+) = all-trans-4,4'-diaponeurosporene + 3 FADH2. Its pathway is carotenoid biosynthesis; staphyloxanthin biosynthesis; staphyloxanthin from farnesyl diphosphate: step 2/5. Involved in the biosynthesis of the yellow-orange carotenoid staphyloxanthin, which plays a role in the virulence via its protective function against oxidative stress. Catalyzes three successive dehydrogenation reactions that lead to the introduction of three double bonds into 4,4'-diapophytoene (dehydrosqualene), with 4,4'-diapophytofluene and 4,4'-diapo-zeta-carotene as intermediates, and 4,4'-diaponeurosporene (the major deep-yellow pigment in staphylococci strains) as the end product. The protein is 4,4'-diapophytoene desaturase (4,4'-diaponeurosporene-forming) of Staphylococcus aureus (strain COL).